Reading from the N-terminus, the 552-residue chain is Threonylcarbamoyladenosine tRNA methylthiotransferase (552 aa).

A disordered region spans residues 31 to 61; that stretch reads YENKKTVTVRAKKRSQIRLESQEEEEKPKPT. The region spanning 71–178 is the MTTase N-terminal domain; the sequence is QKVFVKTWGC…VVEVVEETLK (108 aa). [4Fe-4S] cluster-binding residues include cysteine 80, cysteine 115, cysteine 144, cysteine 221, cysteine 225, and cysteine 228. The Radical SAM core domain maps to 207 to 438; the sequence is RKNPLIEIIS…DLFYSYEPYA (232 aa). The TRAM domain occupies 438–500; the sequence is ADRVGEIYTV…KFSMVGEILD (63 aa). Residues 532–552 traverse the membrane as a helical segment; it reads FGIALVLGSLAFLIQLVVRLL.

It belongs to the methylthiotransferase family. CDKAL1 subfamily. [4Fe-4S] cluster serves as cofactor.

The protein resides in the membrane. The catalysed reaction is N(6)-L-threonylcarbamoyladenosine(37) in tRNA + (sulfur carrier)-SH + AH2 + 2 S-adenosyl-L-methionine = 2-methylsulfanyl-N(6)-L-threonylcarbamoyladenosine(37) in tRNA + (sulfur carrier)-H + 5'-deoxyadenosine + L-methionine + A + S-adenosyl-L-homocysteine + 2 H(+). In terms of biological role, catalyzes the methylthiolation of N6-threonylcarbamoyladenosine (t(6)A), leading to the formation of 2-methylthio-N6-threonylcarbamoyladenosine (ms(2)t(6)A) at position 37 in tRNAs that read codons beginning with adenine. This chain is Threonylcarbamoyladenosine tRNA methylthiotransferase, found in Drosophila melanogaster (Fruit fly).